A 311-amino-acid polypeptide reads, in one-letter code: tRNA(Ile)-lysidine synthase (311 aa).

Position 31-36 (31-36 (SGGKDS)) interacts with ATP.

This sequence belongs to the tRNA(Ile)-lysidine synthase family.

It localises to the cytoplasm. The enzyme catalyses cytidine(34) in tRNA(Ile2) + L-lysine + ATP = lysidine(34) in tRNA(Ile2) + AMP + diphosphate + H(+). Ligates lysine onto the cytidine present at position 34 of the AUA codon-specific tRNA(Ile) that contains the anticodon CAU, in an ATP-dependent manner. Cytidine is converted to lysidine, thus changing the amino acid specificity of the tRNA from methionine to isoleucine. This chain is tRNA(Ile)-lysidine synthase, found in Petrotoga mobilis (strain DSM 10674 / SJ95).